The sequence spans 317 residues: Pseudouridine-5'-phosphate glycosidase 1 (317 aa).

Residue Glu40 is the Proton donor of the active site. Lys101 and Val121 together coordinate substrate. A Mn(2+)-binding site is contributed by Asp153. 155 to 157 is a substrate binding site; sequence SAD. Lys174 acts as the Nucleophile in catalysis.

This sequence belongs to the pseudouridine-5'-phosphate glycosidase family. In terms of assembly, homotrimer. It depends on Mn(2+) as a cofactor.

It catalyses the reaction D-ribose 5-phosphate + uracil = psi-UMP + H2O. Functionally, catalyzes the reversible cleavage of pseudouridine 5'-phosphate (PsiMP) to ribose 5-phosphate and uracil. Functions biologically in the cleavage direction, as part of a pseudouridine degradation pathway. The protein is Pseudouridine-5'-phosphate glycosidase 1 of Rhizobium johnstonii (strain DSM 114642 / LMG 32736 / 3841) (Rhizobium leguminosarum bv. viciae).